Consider the following 128-residue polypeptide: Small ribosomal subunit protein uS8 (128 aa).

Belongs to the universal ribosomal protein uS8 family. As to quaternary structure, part of the 30S ribosomal subunit. Contacts proteins S5 and S12.

One of the primary rRNA binding proteins, it binds directly to 16S rRNA central domain where it helps coordinate assembly of the platform of the 30S subunit. The polypeptide is Small ribosomal subunit protein uS8 (Methylacidiphilum infernorum (isolate V4) (Methylokorus infernorum (strain V4))).